The chain runs to 310 residues: tRNA-cytidine(32) 2-sulfurtransferase (310 aa).

Positions 44 to 49 match the PP-loop motif motif; that stretch reads SGGKDS. Cysteine 119, cysteine 122, and cysteine 210 together coordinate [4Fe-4S] cluster.

The protein belongs to the TtcA family. As to quaternary structure, homodimer. Requires Mg(2+) as cofactor. The cofactor is [4Fe-4S] cluster.

It is found in the cytoplasm. It carries out the reaction cytidine(32) in tRNA + S-sulfanyl-L-cysteinyl-[cysteine desulfurase] + AH2 + ATP = 2-thiocytidine(32) in tRNA + L-cysteinyl-[cysteine desulfurase] + A + AMP + diphosphate + H(+). Its pathway is tRNA modification. Catalyzes the ATP-dependent 2-thiolation of cytidine in position 32 of tRNA, to form 2-thiocytidine (s(2)C32). The sulfur atoms are provided by the cysteine/cysteine desulfurase (IscS) system. The protein is tRNA-cytidine(32) 2-sulfurtransferase of Saccharophagus degradans (strain 2-40 / ATCC 43961 / DSM 17024).